The primary structure comprises 715 residues: L-type lectin-domain containing receptor kinase VIII.1 (715 aa).

Residues 1 to 21 (MSLFLSFFISILLCFFNGATT) form the signal peptide. Positions 22-247 (TQFDFSTLAI…IHSIEWWSFS (226 aa)) are legume-lectin like. Over 22 to 317 (TQFDFSTLAI…SRFCKENPGT (296 aa)) the chain is Extracellular. N-linked (GlcNAc...) asparagine glycosylation is found at N126 and N195. Residues 255–296 (GSGSGSPPPRANLMNPKANSVKSPPPLASQPSSSAIPISSNT) form a disordered region. Over residues 283–296 (SQPSSSAIPISSNT) the composition is skewed to low complexity. A helical membrane pass occupies residues 318-338 (IAGVVTAGAFFLALFAGALFW). The Cytoplasmic portion of the chain corresponds to 339–715 (VYSKKFKRVE…IIRSDDDHLV (377 aa)). One can recognise a Protein kinase domain in the interval 376-676 (FNESRIIGHG…MSFSTSHLLL (301 aa)). ATP is bound by residues 382 to 390 (IGHGAFGVV) and K405. The Proton acceptor role is filled by D500.

The protein in the C-terminal section; belongs to the protein kinase superfamily. Ser/Thr protein kinase family. In the N-terminal section; belongs to the leguminous lectin family.

The protein resides in the cell membrane. It carries out the reaction L-seryl-[protein] + ATP = O-phospho-L-seryl-[protein] + ADP + H(+). The enzyme catalyses L-threonyl-[protein] + ATP = O-phospho-L-threonyl-[protein] + ADP + H(+). The polypeptide is L-type lectin-domain containing receptor kinase VIII.1 (LECRK81) (Arabidopsis thaliana (Mouse-ear cress)).